The sequence spans 122 residues: UPF0738 protein YjbL (122 aa).

It belongs to the UPF0738 family.

This chain is UPF0738 protein YjbL (yjbL), found in Bacillus subtilis (strain 168).